Consider the following 362-residue polypeptide: UDP-N-acetylglucosamine--N-acetylmuramyl-(pentapeptide) pyrophosphoryl-undecaprenol N-acetylglucosamine transferase (362 aa).

UDP-N-acetyl-alpha-D-glucosamine contacts are provided by residues 21–23 (TGG), Asn-129, Arg-170, Ser-198, and Gln-290.

Belongs to the glycosyltransferase 28 family. MurG subfamily.

It is found in the cell inner membrane. The catalysed reaction is di-trans,octa-cis-undecaprenyl diphospho-N-acetyl-alpha-D-muramoyl-L-alanyl-D-glutamyl-meso-2,6-diaminopimeloyl-D-alanyl-D-alanine + UDP-N-acetyl-alpha-D-glucosamine = di-trans,octa-cis-undecaprenyl diphospho-[N-acetyl-alpha-D-glucosaminyl-(1-&gt;4)]-N-acetyl-alpha-D-muramoyl-L-alanyl-D-glutamyl-meso-2,6-diaminopimeloyl-D-alanyl-D-alanine + UDP + H(+). Its pathway is cell wall biogenesis; peptidoglycan biosynthesis. In terms of biological role, cell wall formation. Catalyzes the transfer of a GlcNAc subunit on undecaprenyl-pyrophosphoryl-MurNAc-pentapeptide (lipid intermediate I) to form undecaprenyl-pyrophosphoryl-MurNAc-(pentapeptide)GlcNAc (lipid intermediate II). This chain is UDP-N-acetylglucosamine--N-acetylmuramyl-(pentapeptide) pyrophosphoryl-undecaprenol N-acetylglucosamine transferase, found in Synechococcus sp. (strain JA-3-3Ab) (Cyanobacteria bacterium Yellowstone A-Prime).